Consider the following 295-residue polypeptide: Probable alpha-L-glutamate ligase (295 aa).

One can recognise an ATP-grasp domain in the interval 104 to 287 (HQLLAAQGID…VAGAIVQHLE (184 aa)). ATP is bound by residues Lys141, 178–179 (EF), Asp187, and 211–213 (RSN). Mg(2+) is bound by residues Asp248, Glu260, and Asn262. The Mn(2+) site is built by Asp248, Glu260, and Asn262.

This sequence belongs to the RimK family. Mg(2+) serves as cofactor. The cofactor is Mn(2+).

This chain is Probable alpha-L-glutamate ligase, found in Xanthomonas oryzae pv. oryzae (strain MAFF 311018).